The sequence spans 158 residues: 2-C-methyl-D-erythritol 2,4-cyclodiphosphate synthase (158 aa).

Residues D9 and H11 each contribute to the a divalent metal cation site. Residues 9 to 11 and 35 to 36 each bind 4-CDP-2-C-methyl-D-erythritol 2-phosphate; these read DVH and HS. Residue H43 participates in a divalent metal cation binding. Residues 57–59, 62–66, 101–107, 133–136, F140, and R143 contribute to the 4-CDP-2-C-methyl-D-erythritol 2-phosphate site; these read DIG, FPDTD, AQAPKMA, and TTTE.

The protein belongs to the IspF family. Homotrimer. A divalent metal cation serves as cofactor.

The catalysed reaction is 4-CDP-2-C-methyl-D-erythritol 2-phosphate = 2-C-methyl-D-erythritol 2,4-cyclic diphosphate + CMP. It functions in the pathway isoprenoid biosynthesis; isopentenyl diphosphate biosynthesis via DXP pathway; isopentenyl diphosphate from 1-deoxy-D-xylulose 5-phosphate: step 4/6. In terms of biological role, involved in the biosynthesis of isopentenyl diphosphate (IPP) and dimethylallyl diphosphate (DMAPP), two major building blocks of isoprenoid compounds. Catalyzes the conversion of 4-diphosphocytidyl-2-C-methyl-D-erythritol 2-phosphate (CDP-ME2P) to 2-C-methyl-D-erythritol 2,4-cyclodiphosphate (ME-CPP) with a corresponding release of cytidine 5-monophosphate (CMP). The polypeptide is 2-C-methyl-D-erythritol 2,4-cyclodiphosphate synthase (Vibrio campbellii (strain ATCC BAA-1116)).